A 110-amino-acid polypeptide reads, in one-letter code: Ferredoxin (110 aa).

2 4Fe-4S ferredoxin-type domains span residues 2-30 (TYIVTDECVKCKYTDCVEVCPVDCFYEGE) and 31-60 (FMLVINPDECIDCGVCVPDCPIDAIKPESP). [3Fe-4S] cluster contacts are provided by cysteine 9 and cysteine 17. Positions 21, 40, 43, and 46 each coordinate [4Fe-4S] cluster. Cysteine 50 is a binding site for [3Fe-4S] cluster.

[4Fe-4S] cluster is required as a cofactor. [3Fe-4S] cluster serves as cofactor.

Its function is as follows. Ferredoxins are iron-sulfur proteins that transfer electrons in a wide variety of metabolic reactions. This chain is Ferredoxin (fdxA), found in Rickettsia typhi (strain ATCC VR-144 / Wilmington).